The chain runs to 249 residues: Triosephosphate isomerase (249 aa).

Residue 9 to 11 (NWK) participates in substrate binding. His-95 functions as the Electrophile in the catalytic mechanism. Glu-167 acts as the Proton acceptor in catalysis. Residues Gly-173, Ser-213, and 234 to 235 (GG) contribute to the substrate site.

This sequence belongs to the triosephosphate isomerase family. As to quaternary structure, homodimer.

It is found in the cytoplasm. It catalyses the reaction D-glyceraldehyde 3-phosphate = dihydroxyacetone phosphate. Its pathway is carbohydrate biosynthesis; gluconeogenesis. The protein operates within carbohydrate degradation; glycolysis; D-glyceraldehyde 3-phosphate from glycerone phosphate: step 1/1. In terms of biological role, involved in the gluconeogenesis. Catalyzes stereospecifically the conversion of dihydroxyacetone phosphate (DHAP) to D-glyceraldehyde-3-phosphate (G3P). This Dictyoglomus thermophilum (strain ATCC 35947 / DSM 3960 / H-6-12) protein is Triosephosphate isomerase.